The following is a 138-amino-acid chain: Acidic phospholipase A2 2 (138 aa).

Positions 1-16 (MRTLWIVAVLLLGVEG) are cleaved as a signal peptide. 7 disulfide bridges follow: C42–C131, C44–C60, C59–C111, C65–C138, C66–C104, C73–C97, and C91–C102. Residues Y43, G45, and G47 each coordinate Ca(2+). H63 is an active-site residue. Residue D64 coordinates Ca(2+). D105 is an active-site residue.

This sequence belongs to the phospholipase A2 family. Group II subfamily. D49 sub-subfamily. Ca(2+) serves as cofactor. In terms of tissue distribution, expressed by the venom gland.

The protein resides in the secreted. It catalyses the reaction a 1,2-diacyl-sn-glycero-3-phosphocholine + H2O = a 1-acyl-sn-glycero-3-phosphocholine + a fatty acid + H(+). Its function is as follows. Snake venom phospholipase A2 (PLA2) that displays edema-inducing activities, exhibits indirect hemolytic activity, and inhibits ADP-induced platelet aggregation. PLA2 catalyzes the calcium-dependent hydrolysis of the 2-acyl groups in 3-sn-phosphoglycerides. This is Acidic phospholipase A2 2 from Protobothrops mucrosquamatus (Taiwan habu).